We begin with the raw amino-acid sequence, 108 residues long: uncharacterized protein (108 aa).

A helical transmembrane segment spans residues Leu-72–Phe-94.

Its subcellular location is the membrane. This is an uncharacterized protein from Saccharomyces cerevisiae (strain ATCC 204508 / S288c) (Baker's yeast).